A 616-amino-acid polypeptide reads, in one-letter code: MDRAVSQVALENDEREAKNTWRLVFRIAILLSTVVTLAISAAALAYSMEASTPSDLVGIPTAISRAEEKITSALGSNQDVVDRIYKQVALESPLALLNTESTIMNAITSLSYRINGAANSSGCGAPIHDPDYIGGIGKELIVDDASDVTSYYPSAFQEHLNFIPAPTTGSGCTRIPSFDMSATHYCYTHNVILSGCRDHSHSHQYLALGVLRTSATGRVFFSTLRSINLDDTQNRKSCSVSATPLGCDMLCSKVTETEEEDYNSAIPTSMVHGRLGFDGQYHEKDLDVTTLFEDWVANYPGVGGGSFIDNRVWFPVYGGLKPNSPSDTAQEGKYVIYKRYNDTCPDEQDYQIQMAKSSYKPGRFGGKRVQQAILSIKVSTSLGEDPVLTVPPNTVTLMGAEGRVLTVGTSHFLYQRGSSYFSPALLYPMIVSNKTATLHSPYTFNAFTRPGSVPCQASARCPNSCVTGVYTDPYPLVFYRNHTLRGVFGTMLDDKQARLNPVSAVFDSISRSRITRVSSSSTKAAYTTSTCFKVVKTNKTYCLSIAEISNTLFGEFRIVPLLVEILKDDGVREARSSRLSQLREGWKDDIVSPIFCDAKNQTEYRRELESYAASWP.

Residues 1-26 (MDRAVSQVALENDEREAKNTWRLVFR) lie on the Intravirion side of the membrane. Residues 27-47 (IAILLSTVVTLAISAAALAYS) traverse the membrane as a helical segment. Residues 48–616 (MEASTPSDLV…ELESYAASWP (569 aa)) lie on the Virion surface side of the membrane. N-linked (GlcNAc...) asparagine; by host glycosylation occurs at asparagine 119. An important for interaction with fusion/F protein region spans residues 124–152 (GAPIHDPDYIGGIGKELIVDDASDVTSYY). 3 disulfide bridges follow: cysteine 172-cysteine 196, cysteine 186-cysteine 247, and cysteine 238-cysteine 251. The involved in neuraminidase activity stretch occupies residues 234 to 239 (NRKSCS). N-linked (GlcNAc...) asparagine; by host glycans are attached at residues asparagine 341 and asparagine 433. 2 cysteine pairs are disulfide-bonded: cysteine 344–cysteine 461 and cysteine 455–cysteine 465. Asparagine 481, asparagine 538, and asparagine 600 each carry an N-linked (GlcNAc...) asparagine; by host glycan. The cysteines at positions 531 and 542 are disulfide-linked.

Belongs to the paramyxoviruses hemagglutinin-neuraminidase family. Homotetramer; composed of disulfide-linked homodimers. Interacts with F protein trimer. Interacts with host CG-1B; this interaction inhibits viral adsorption and replication rather than internalization.

Its subcellular location is the virion membrane. The protein localises to the host cell membrane. It carries out the reaction Hydrolysis of alpha-(2-&gt;3)-, alpha-(2-&gt;6)-, alpha-(2-&gt;8)- glycosidic linkages of terminal sialic acid residues in oligosaccharides, glycoproteins, glycolipids, colominic acid and synthetic substrates.. In terms of biological role, mediates the viral entry into the host cell together with fusion/F protein. Attaches the virus to sialic acid-containing cell receptors and thereby initiates infection. Binding of HN protein to the receptor induces a conformational change that allows the F protein to trigger virion/cell membranes fusion. Functionally, neuraminidase activity ensures the efficient spread of the virus by dissociating the mature virions from the neuraminic acid containing glycoproteins. This is Hemagglutinin-neuraminidase (HN) from Newcastle disease virus (strain Queensland/66) (NDV).